The following is a 684-amino-acid chain: Probable Xaa-Pro aminopeptidase P (684 aa).

Mn(2+)-binding residues include D481, D492, E590, and E604.

This sequence belongs to the peptidase M24B family. Mn(2+) is required as a cofactor.

The catalysed reaction is Release of any N-terminal amino acid, including proline, that is linked to proline, even from a dipeptide or tripeptide.. Functionally, catalyzes the removal of a penultimate prolyl residue from the N-termini of peptides. In Neurospora crassa (strain ATCC 24698 / 74-OR23-1A / CBS 708.71 / DSM 1257 / FGSC 987), this protein is Probable Xaa-Pro aminopeptidase P (ampp).